The chain runs to 469 residues: Cysteine--tRNA ligase (469 aa).

C28 contacts Zn(2+). A 'HIGH' region motif is present at residues 30 to 40; that stretch reads CTVYDLCHIGH. Zn(2+) contacts are provided by C216, H241, and E245. The 'KMSKS' region signature appears at 273 to 277; sequence KMSKS. K276 is an ATP binding site.

This sequence belongs to the class-I aminoacyl-tRNA synthetase family. Monomer. Zn(2+) is required as a cofactor.

It is found in the cytoplasm. The enzyme catalyses tRNA(Cys) + L-cysteine + ATP = L-cysteinyl-tRNA(Cys) + AMP + diphosphate. The protein is Cysteine--tRNA ligase of Colwellia psychrerythraea (strain 34H / ATCC BAA-681) (Vibrio psychroerythus).